We begin with the raw amino-acid sequence, 366 residues long: Sulfate/thiosulfate import ATP-binding protein CysA 2 (366 aa).

Positions 14–243 (LSVHALCRRF…PASRFVAEFV (230 aa)) constitute an ABC transporter domain. 46–53 (GPSGCGKT) lines the ATP pocket.

This sequence belongs to the ABC transporter superfamily. Sulfate/tungstate importer (TC 3.A.1.6) family. As to quaternary structure, the complex is composed of two ATP-binding proteins (CysA), two transmembrane proteins (CysT and CysW) and a solute-binding protein (CysP).

It localises to the cell inner membrane. The catalysed reaction is sulfate(out) + ATP + H2O = sulfate(in) + ADP + phosphate + H(+). It carries out the reaction thiosulfate(out) + ATP + H2O = thiosulfate(in) + ADP + phosphate + H(+). In terms of biological role, part of the ABC transporter complex CysAWTP involved in sulfate/thiosulfate import. Responsible for energy coupling to the transport system. This chain is Sulfate/thiosulfate import ATP-binding protein CysA 2, found in Chromobacterium violaceum (strain ATCC 12472 / DSM 30191 / JCM 1249 / CCUG 213 / NBRC 12614 / NCIMB 9131 / NCTC 9757 / MK).